A 223-amino-acid chain; its full sequence is MDLASLRAQQIELASSVCREDRLDKDPPAFIGGADVGFEQGGEVTWAAMVLLKYPSLELVEYKVARIATTMPYIPGFLSFREYPALLAAWEQLSQKPDLLFVDGHGISHPRRLGVASHFGLLVDVPTIGVAKKRLCGKFEPLSTEPGALSPLMDKGEQLAWVWRSKARCNPLFIATGHRVSTDSALAWVQRCMKGYRLPEPTRWADAVASGRPAFVRWQEIQR.

Mg(2+) contacts are provided by aspartate 35 and aspartate 103.

Belongs to the endonuclease V family. Mg(2+) serves as cofactor.

The protein resides in the cytoplasm. It catalyses the reaction Endonucleolytic cleavage at apurinic or apyrimidinic sites to products with a 5'-phosphate.. In terms of biological role, DNA repair enzyme involved in the repair of deaminated bases. Selectively cleaves double-stranded DNA at the second phosphodiester bond 3' to a deoxyinosine leaving behind the intact lesion on the nicked DNA. The protein is Endonuclease V of Salmonella paratyphi A (strain ATCC 9150 / SARB42).